A 254-amino-acid chain; its full sequence is HTH-type transcriptional regulator GolR (254 aa).

An HTH deoR-type domain is found at 3–58; it reads PFERQNKIIHLLDQNNKITVPELSRILDVSISTIRNDLSALEESGMIKKVHGGAVL. The H-T-H motif DNA-binding region spans 20–39; it reads ITVPELSRILDVSISTIRND.

Functionally, involved in the glycerol metabolism. Repressor of the gol operon for glycerol metabolism. The protein is HTH-type transcriptional regulator GolR of Listeria innocua serovar 6a (strain ATCC BAA-680 / CLIP 11262).